The primary structure comprises 101 residues: Iron-sulfur cluster assembly protein CyaY (101 aa).

The protein belongs to the frataxin family.

Its function is as follows. Involved in iron-sulfur (Fe-S) cluster assembly. May act as a regulator of Fe-S biogenesis. This chain is Iron-sulfur cluster assembly protein CyaY, found in Rickettsia felis (strain ATCC VR-1525 / URRWXCal2) (Rickettsia azadi).